A 398-amino-acid polypeptide reads, in one-letter code: Acetate kinase (398 aa).

Asn8 is a binding site for Mg(2+). Residue Lys15 coordinates ATP. Arg89 is a binding site for substrate. Residue Asp146 is the Proton donor/acceptor of the active site. ATP-binding positions include 206–210 (HIGNG), 283–285 (DMR), and 331–335 (GMGEN). Glu383 is a Mg(2+) binding site.

The protein belongs to the acetokinase family. As to quaternary structure, homodimer. The cofactor is Mg(2+). Mn(2+) serves as cofactor.

The protein localises to the cytoplasm. The enzyme catalyses acetate + ATP = acetyl phosphate + ADP. The protein operates within metabolic intermediate biosynthesis; acetyl-CoA biosynthesis; acetyl-CoA from acetate: step 1/2. Functionally, catalyzes the formation of acetyl phosphate from acetate and ATP. Can also catalyze the reverse reaction. This Streptococcus pyogenes serotype M2 (strain MGAS10270) protein is Acetate kinase.